A 299-amino-acid chain; its full sequence is Kruppel-like factor 2 (299 aa).

Disordered stretches follow at residues 19–38 (YQNA…SHHH) and 146–189 (YSFS…RRDK). Residues 23–38 (HHQHHQQHYHQQSHHH) are compositionally biased toward basic residues. Basic and acidic residues predominate over residues 153–180 (SGKDEEDPRIPLKDRGRVYHPQSTEKPK). 3 C2H2-type zinc fingers span residues 198 to 222 (HKCF…ERVH), 228 to 252 (YPCE…YRKH), and 258 to 280 (FACK…MKRH).

Belongs to the krueppel C2H2-type zinc-finger protein family. In terms of tissue distribution, expressed predominantly in intestine.

The protein resides in the nucleus. Functionally, probable transcription factor which regulates lipid metabolism. In Caenorhabditis elegans, this protein is Kruppel-like factor 2.